Consider the following 782-residue polypeptide: E3 UFM1-protein ligase 1 homolog (782 aa).

The interval 404-477 is disordered; sequence NASTQELEDD…GSRGGGGVNK (74 aa). A compositionally biased stretch (basic residues) spans 443–453; that stretch reads KSTKKHQRGKA.

It belongs to the UFL1 family.

Its function is as follows. E3 UFM1-protein ligase that mediates ufmylation of target proteins. The sequence is that of E3 UFM1-protein ligase 1 homolog from Drosophila erecta (Fruit fly).